We begin with the raw amino-acid sequence, 1119 residues long: Translation initiation factor IF-2 (1119 aa).

Disordered regions lie at residues 64–463 and 477–507; these read SIKK…TSGY and RPKK…RQRQ. Basic and acidic residues predominate over residues 70-102; that stretch reads IKKDNYKQNKEDKSSLISSVEEKPFKDNPEKKP. Composition is skewed to polar residues over residues 116–153 and 182–212; these read IISN…QNLN and KNTT…KPDQ. Residues 213 to 224 show a composition bias toward low complexity; the sequence is NSSKSKTKNINN. Polar residues-rich tracts occupy residues 242–257, 281–297, 319–328, and 375–387; these read NKQN…QTVP, FNRQ…SSNK, FNRQVNTNRS, and QVIN…NSET. The segment covering 421 to 435 has biased composition (basic and acidic residues); the sequence is GKTDWDDSAKLEALR. The span at 493-507 shows a compositional bias: basic residues; the sequence is KQFKKKKKETTRQRQ. In terms of domain architecture, tr-type G spans 610 to 782; the sequence is KRPPVITVMG…ILLVSEVEDL (173 aa). Residues 619–626 are G1; sequence GHVDHGKT. GTP is bound at residue 619–626; the sequence is GHVDHGKT. The interval 644–648 is G2; that stretch reads GITQH. A G3 region spans residues 669–672; sequence DTPG. GTP contacts are provided by residues 669–673 and 723–726; these read DTPGH and NKID. The tract at residues 723–726 is G4; the sequence is NKID. The G5 stretch occupies residues 759–761; the sequence is SAI.

The protein belongs to the TRAFAC class translation factor GTPase superfamily. Classic translation factor GTPase family. IF-2 subfamily.

It localises to the cytoplasm. Its function is as follows. One of the essential components for the initiation of protein synthesis. Protects formylmethionyl-tRNA from spontaneous hydrolysis and promotes its binding to the 30S ribosomal subunits. Also involved in the hydrolysis of GTP during the formation of the 70S ribosomal complex. The sequence is that of Translation initiation factor IF-2 from Prochlorococcus marinus (strain MIT 9215).